Reading from the N-terminus, the 276-residue chain is Diaminopimelate epimerase (276 aa).

Residues asparagine 13, glutamine 46, and asparagine 66 each contribute to the substrate site. Catalysis depends on cysteine 75, which acts as the Proton donor. Substrate is bound by residues 76-77 (GN), asparagine 159, asparagine 192, and 210-211 (ER). Residue cysteine 219 is the Proton acceptor of the active site. A substrate-binding site is contributed by 220 to 221 (GT).

This sequence belongs to the diaminopimelate epimerase family. In terms of assembly, homodimer.

The protein resides in the cytoplasm. The enzyme catalyses (2S,6S)-2,6-diaminopimelate = meso-2,6-diaminopimelate. Its pathway is amino-acid biosynthesis; L-lysine biosynthesis via DAP pathway; DL-2,6-diaminopimelate from LL-2,6-diaminopimelate: step 1/1. Functionally, catalyzes the stereoinversion of LL-2,6-diaminopimelate (L,L-DAP) to meso-diaminopimelate (meso-DAP), a precursor of L-lysine and an essential component of the bacterial peptidoglycan. This chain is Diaminopimelate epimerase, found in Pseudomonas syringae pv. tomato (strain ATCC BAA-871 / DC3000).